Here is a 374-residue protein sequence, read N- to C-terminus: uncharacterized protein (374 aa).

A compositionally biased stretch (basic and acidic residues) spans Met1–Thr13. Disordered regions lie at residues Met1–Lys20, Ser91–Gln193, and Lys236–Glu374. A compositionally biased stretch (low complexity) spans Asn95–Asn155. Positions Ile166–Gln193 are enriched in polar residues. Residues Ala242–Ile262 are compositionally biased toward pro residues. Residues Asn277–Thr300 show a composition bias toward low complexity.

This is an uncharacterized protein from Dictyostelium discoideum (Social amoeba).